The sequence spans 209 residues: Small ribosomal subunit protein uS4 (209 aa).

One can recognise an S4 RNA-binding domain in the interval 99–161 (CRLDNIAFRL…SSKLVVVEMG (63 aa)).

It belongs to the universal ribosomal protein uS4 family. In terms of assembly, part of the 30S ribosomal subunit. Contacts protein S5. The interaction surface between S4 and S5 is involved in control of translational fidelity.

Functionally, one of the primary rRNA binding proteins, it binds directly to 16S rRNA where it nucleates assembly of the body of the 30S subunit. Its function is as follows. With S5 and S12 plays an important role in translational accuracy. In Acidobacterium capsulatum (strain ATCC 51196 / DSM 11244 / BCRC 80197 / JCM 7670 / NBRC 15755 / NCIMB 13165 / 161), this protein is Small ribosomal subunit protein uS4.